The following is a 258-amino-acid chain: UPF0246 protein mma_1385 (258 aa).

This sequence belongs to the UPF0246 family.

This is UPF0246 protein mma_1385 from Janthinobacterium sp. (strain Marseille) (Minibacterium massiliensis).